Consider the following 90-residue polypeptide: MSSMDNTMKFNVNEEPVSVDVQEVLMSVYEALEEKGYNPINQIVGYLLSGDPAYIPRHKDARTLIRKLERDELIEELVKSYLSQHRKSLE.

This sequence belongs to the UPF0297 family.

This chain is UPF0297 protein BH1268, found in Halalkalibacterium halodurans (strain ATCC BAA-125 / DSM 18197 / FERM 7344 / JCM 9153 / C-125) (Bacillus halodurans).